The primary structure comprises 147 residues: NADPH-dependent 7-cyano-7-deazaguanine reductase (147 aa).

Residues 1–23 (MQTTHLGKNSPIPQSPEEASLDY) form a disordered region. Cys-46 functions as the Thioimide intermediate in the catalytic mechanism. Asp-53 acts as the Proton donor in catalysis. Residues 68 to 70 (VES) and 87 to 88 (HE) contribute to the substrate site.

This sequence belongs to the GTP cyclohydrolase I family. QueF type 1 subfamily.

The protein resides in the cytoplasm. The catalysed reaction is 7-aminomethyl-7-carbaguanine + 2 NADP(+) = 7-cyano-7-deazaguanine + 2 NADPH + 3 H(+). It participates in tRNA modification; tRNA-queuosine biosynthesis. In terms of biological role, catalyzes the NADPH-dependent reduction of 7-cyano-7-deazaguanine (preQ0) to 7-aminomethyl-7-deazaguanine (preQ1). The polypeptide is NADPH-dependent 7-cyano-7-deazaguanine reductase (Zymomonas mobilis subsp. mobilis (strain ATCC 31821 / ZM4 / CP4)).